Here is a 664-residue protein sequence, read N- to C-terminus: Macoilin (664 aa).

The next 4 helical transmembrane spans lie at 28–48, 75–95, 120–140, and 154–174; these read TFLY…DFVL, AFSV…LLFI, VCLP…AIRF, and FAAH…KSYV. A compositionally biased stretch (basic and acidic residues) spans 253 to 265; sequence REKGKEKDKDAKK. Residues 253–274 are disordered; sequence REKGKEKDKDAKKHNLGINNNN. Residue Ser305 is modified to Phosphoserine. The segment covering 320–348 has biased composition (polar residues); sequence KNYKNASGVVNSSPRSHSATNGSIPSSSS. The disordered stretch occupies residues 320–367; the sequence is KNYKNASGVVNSSPRSHSATNGSIPSSSSKNEKKQKCTSKSPSAHKDL. An N-linked (GlcNAc...) asparagine glycan is attached at Asn324. Ser332 carries the post-translational modification Phosphoserine. N-linked (GlcNAc...) asparagine glycans are attached at residues Asn340 and Asn452. Positions 630–664 are disordered; sequence TSPLSPVSPHYSSKFVETSPSGLDPNASVYQPLKK. Ser631 and Ser634 each carry phosphoserine. An N-linked (GlcNAc...) asparagine glycan is attached at Asn655.

The protein belongs to the macoilin family.

It localises to the rough endoplasmic reticulum membrane. The protein resides in the nucleus membrane. Its function is as follows. Plays a role in the regulation of neuronal activity. The sequence is that of Macoilin (MACO1) from Sus scrofa (Pig).